An 874-amino-acid polypeptide reads, in one-letter code: Alanine--tRNA ligase (874 aa).

Zn(2+) contacts are provided by H562, H566, C665, and H669.

Belongs to the class-II aminoacyl-tRNA synthetase family. Zn(2+) serves as cofactor.

Its subcellular location is the cytoplasm. The catalysed reaction is tRNA(Ala) + L-alanine + ATP = L-alanyl-tRNA(Ala) + AMP + diphosphate. Its function is as follows. Catalyzes the attachment of alanine to tRNA(Ala) in a two-step reaction: alanine is first activated by ATP to form Ala-AMP and then transferred to the acceptor end of tRNA(Ala). Also edits incorrectly charged Ser-tRNA(Ala) and Gly-tRNA(Ala) via its editing domain. The polypeptide is Alanine--tRNA ligase (Pseudomonas syringae pv. syringae (strain B728a)).